A 204-amino-acid chain; its full sequence is Protein GrpE (204 aa).

Residues 1-12 (MSNQEKKMHEEE) show a composition bias toward basic and acidic residues. Residues 1-37 (MSNQEKKMHEEELQQQETVEADTEAEAEAVGTDADIE) are disordered.

Belongs to the GrpE family. As to quaternary structure, homodimer.

The protein resides in the cytoplasm. Its function is as follows. Participates actively in the response to hyperosmotic and heat shock by preventing the aggregation of stress-denatured proteins, in association with DnaK and GrpE. It is the nucleotide exchange factor for DnaK and may function as a thermosensor. Unfolded proteins bind initially to DnaJ; upon interaction with the DnaJ-bound protein, DnaK hydrolyzes its bound ATP, resulting in the formation of a stable complex. GrpE releases ADP from DnaK; ATP binding to DnaK triggers the release of the substrate protein, thus completing the reaction cycle. Several rounds of ATP-dependent interactions between DnaJ, DnaK and GrpE are required for fully efficient folding. The protein is Protein GrpE of Vibrio proteolyticus (Aeromonas proteolytica).